The sequence spans 402 residues: MNITGIIAEYNPMHNGHIHHLEKTKEICKSDVILCVMSGDFVQRGEPAIIDKWSRAYAALSSGVDLVIELPCVYSLSSAEFFAYGAVSLLNSLGSVSNICFGSEEGEMHDIYLISKILVDEPYEYKSILKDYLNQGFSFPKSRMHALEMYLNSSLSKVDHGLNHDILSSSNNILGVEYCKSLIKLKSNIKPYTIKREGNNYNDLELKTISSASAIRNALKSKKEISTLRYQVPKKTFDLISDNINSLCYKDYIFDYIKYKALTSKESLNKLPDVSEGIDNKIYNSLLKCSNMDSLMTLTKNKRYTYSRISRILTQYFIGFDCYNTESLRNSPCPYARILGFNEKGKYALKEFKKTSSIPLITKVNNYNFDALSLDINATKAYSLINKSVNPLDDYYRKIIIV.

Residues 7–20 (IAEY…HIHH), G102, N171, and R196 contribute to the ATP site.

The protein belongs to the TmcAL family.

It localises to the cytoplasm. The enzyme catalyses cytidine(34) in elongator tRNA(Met) + acetate + ATP = N(4)-acetylcytidine(34) in elongator tRNA(Met) + AMP + diphosphate. In terms of biological role, catalyzes the formation of N(4)-acetylcytidine (ac(4)C) at the wobble position of elongator tRNA(Met), using acetate and ATP as substrates. First activates an acetate ion to form acetyladenylate (Ac-AMP) and then transfers the acetyl group to tRNA to form ac(4)C34. This chain is tRNA(Met) cytidine acetate ligase, found in Clostridium acetobutylicum (strain ATCC 824 / DSM 792 / JCM 1419 / IAM 19013 / LMG 5710 / NBRC 13948 / NRRL B-527 / VKM B-1787 / 2291 / W).